We begin with the raw amino-acid sequence, 848 residues long: DNA mismatch repair protein MutS (848 aa).

605 to 612 (GPNMAGKS) lines the ATP pocket.

It belongs to the DNA mismatch repair MutS family.

Its function is as follows. This protein is involved in the repair of mismatches in DNA. It is possible that it carries out the mismatch recognition step. This protein has a weak ATPase activity. This is DNA mismatch repair protein MutS from Leptospira interrogans serogroup Icterohaemorrhagiae serovar Lai (strain 56601).